A 137-amino-acid polypeptide reads, in one-letter code: MFVPKKSKYRKVFKGRIKGNTKGGSTLSFGDYGLKTIEAGRVQSKHIETVRRVISRTLKRSGKIWIRIFPDTPISKKPTDVRMGKGKGSVEFWVFKAKPGRVLFEISSDVPMHLAKLALEKAMAKLPVKCKFISNYS.

The protein belongs to the universal ribosomal protein uL16 family. Part of the 50S ribosomal subunit.

In terms of biological role, binds 23S rRNA and is also seen to make contacts with the A and possibly P site tRNAs. The polypeptide is Large ribosomal subunit protein uL16 (Wolbachia sp. subsp. Brugia malayi (strain TRS)).